Consider the following 161-residue polypeptide: MSGHGAPTIDLTTLNPEEASQLKLAIVAASWHTQIMDGLVDGALRAAKEAGIAEPTLLRVPGSFELPVAAARLAPHFDAVVALGVVIRGGTPHFDYVCQAATSGLTDVSVRTGVPVGFGVLTCDTEQQGIDRAGLPGSKEDKGHEAVTAALATAVTLKQFS.

5-amino-6-(D-ribitylamino)uracil contacts are provided by residues Trp-31, 63–65, and 85–87; these read SFE and VVI. 90–91 provides a ligand contact to (2S)-2-hydroxy-3-oxobutyl phosphate; the sequence is GT. His-93 (proton donor) is an active-site residue. Phe-118 contacts 5-amino-6-(D-ribitylamino)uracil. Arg-132 is a binding site for (2S)-2-hydroxy-3-oxobutyl phosphate.

This sequence belongs to the DMRL synthase family.

The enzyme catalyses (2S)-2-hydroxy-3-oxobutyl phosphate + 5-amino-6-(D-ribitylamino)uracil = 6,7-dimethyl-8-(1-D-ribityl)lumazine + phosphate + 2 H2O + H(+). Its pathway is cofactor biosynthesis; riboflavin biosynthesis; riboflavin from 2-hydroxy-3-oxobutyl phosphate and 5-amino-6-(D-ribitylamino)uracil: step 1/2. Functionally, catalyzes the formation of 6,7-dimethyl-8-ribityllumazine by condensation of 5-amino-6-(D-ribitylamino)uracil with 3,4-dihydroxy-2-butanone 4-phosphate. This is the penultimate step in the biosynthesis of riboflavin. The chain is 6,7-dimethyl-8-ribityllumazine synthase from Paenarthrobacter aurescens (strain TC1).